The chain runs to 249 residues: Eukaryotic translation initiation factor 3 subunit J-A (249 aa).

The span at 1 to 15 shows a compositional bias: acidic residues; sequence MADADSWDADSFEPE. Residues 1–104 are disordered; it reads MADADSWDAD…DTPLTPEDEL (104 aa). The segment covering 16–27 has biased composition (basic and acidic residues); it reads EPIKKAAVHDKW. The segment covering 28–52 has biased composition (acidic residues); it reads EGEDEDDDVKDNWDDDEEEEKEEEE. Residues 34–96 adopt a coiled-coil conformation; the sequence is DDVKDNWDDD…QQLEETKRDT (63 aa). Residues 53–96 show a composition bias toward basic and acidic residues; the sequence is EKKTEAKPTEKKKLSEKIKEKENLQRKKQEELRKQQLEETKRDT.

This sequence belongs to the eIF-3 subunit J family. In terms of assembly, component of the eukaryotic translation initiation factor 3 (eIF-3) complex, which is composed of 13 subunits: eif3a, eif3b, eif3c, eif3d, eif3e, eif3f, eif3g, eif3h, eif3i, eif3j, eif3k, eif3l and eif3m.

It localises to the cytoplasm. In terms of biological role, component of the eukaryotic translation initiation factor 3 (eIF-3) complex, which is involved in protein synthesis of a specialized repertoire of mRNAs and, together with other initiation factors, stimulates binding of mRNA and methionyl-tRNAi to the 40S ribosome. The eIF-3 complex specifically targets and initiates translation of a subset of mRNAs involved in cell proliferation. The chain is Eukaryotic translation initiation factor 3 subunit J-A (eif3ja) from Danio rerio (Zebrafish).